We begin with the raw amino-acid sequence, 145 residues long: D-aminoacyl-tRNA deacylase (145 aa).

The short motif at 137–138 (GP) is the Gly-cisPro motif, important for rejection of L-amino acids element.

Belongs to the DTD family. In terms of assembly, homodimer.

Its subcellular location is the cytoplasm. The enzyme catalyses glycyl-tRNA(Ala) + H2O = tRNA(Ala) + glycine + H(+). The catalysed reaction is a D-aminoacyl-tRNA + H2O = a tRNA + a D-alpha-amino acid + H(+). In terms of biological role, an aminoacyl-tRNA editing enzyme that deacylates mischarged D-aminoacyl-tRNAs. Also deacylates mischarged glycyl-tRNA(Ala), protecting cells against glycine mischarging by AlaRS. Acts via tRNA-based rather than protein-based catalysis; rejects L-amino acids rather than detecting D-amino acids in the active site. By recycling D-aminoacyl-tRNA to D-amino acids and free tRNA molecules, this enzyme counteracts the toxicity associated with the formation of D-aminoacyl-tRNA entities in vivo and helps enforce protein L-homochirality. The chain is D-aminoacyl-tRNA deacylase from Pectobacterium atrosepticum (strain SCRI 1043 / ATCC BAA-672) (Erwinia carotovora subsp. atroseptica).